A 267-amino-acid chain; its full sequence is 2-oxo-hept-4-ene-1,7-dioate hydratase (267 aa).

Mg(2+) contacts are provided by glutamate 106, glutamate 108, and glutamate 139.

Belongs to the hydratase/decarboxylase family. As to quaternary structure, homodecamer. Requires Mg(2+) as cofactor.

The enzyme catalyses (4Z)-2-oxohept-4-enedioate + H2O = (4S)-4-hydroxy-2-oxoheptanedioate. It functions in the pathway aromatic compound metabolism; 4-hydroxyphenylacetate degradation; pyruvate and succinate semialdehyde from 4-hydroxyphenylacetate: step 6/7. Its function is as follows. Transforms 2-oxo-hept-4-ene-1,7-dioate (OHED) into 4-hydroxy-2-oxoheptanedioate, a step in the 4-hydroxyphenylacetic acid (4-HPA) degradation pathway. This chain is 2-oxo-hept-4-ene-1,7-dioate hydratase, found in Escherichia coli.